The primary structure comprises 288 residues: ATP synthase gamma chain (288 aa).

Belongs to the ATPase gamma chain family. In terms of assembly, F-type ATPases have 2 components, CF(1) - the catalytic core - and CF(0) - the membrane proton channel. CF(1) has five subunits: alpha(3), beta(3), gamma(1), delta(1), epsilon(1). CF(0) has three main subunits: a, b and c.

The protein resides in the cell inner membrane. Produces ATP from ADP in the presence of a proton gradient across the membrane. The gamma chain is believed to be important in regulating ATPase activity and the flow of protons through the CF(0) complex. This chain is ATP synthase gamma chain, found in Rickettsia akari (strain Hartford).